The sequence spans 430 residues: MTNIVVVGLQWGDEGKGKVVDWLSNNADAVVRFQGGNNAGHTIVIQEKTYKLNLLPSSILHNNKLSIIGNGVVLDPYALMSEIDNLRINGININTQNLVISESCPLVLNIHKEADTLFEQLRQNTIGTTNKGIGPCYADKISRRALRVCDLFDKKDILYNKVNNLLNYHNLLRQNFNILPIEASKLVDELLDIAPKILPFVKPVWKVIHDLTQQNKTIIFEGAQGTFLDIDHGTYPFVTSSNTIAPQAFVGGGINLSHSSCILGVIKAYTTRVGNGPFFTEQKNEIGKSMFERGNEIGTVSNRERRCGWFDAVLAKQAIILSGVSGLVLTKLDVLDQFSEIKICTQYKYDGVIYDYIPASSYVQNNLEPIYETVPGWKENTFGSVTYEDLPKNAISYIKKIEEILKVPVYLISTGPERNAMIIINDKFLK.

GTP is bound by residues 12-18 (GDEGKGK) and 40-42 (GHT). D13 (proton acceptor) is an active-site residue. D13 and G40 together coordinate Mg(2+). IMP-binding positions include 13–16 (DEGK), 38–41 (NAGH), T129, R143, Q224, T239, and R303. The active-site Proton donor is the H41. 299 to 305 (TVSNRER) is a binding site for substrate. Residues R305, 331–333 (KLD), and 413–415 (STG) each bind GTP.

This sequence belongs to the adenylosuccinate synthetase family. As to quaternary structure, homodimer. Mg(2+) is required as a cofactor.

The protein localises to the cytoplasm. The catalysed reaction is IMP + L-aspartate + GTP = N(6)-(1,2-dicarboxyethyl)-AMP + GDP + phosphate + 2 H(+). It participates in purine metabolism; AMP biosynthesis via de novo pathway; AMP from IMP: step 1/2. Its function is as follows. Plays an important role in the de novo pathway of purine nucleotide biosynthesis. Catalyzes the first committed step in the biosynthesis of AMP from IMP. This Ehrlichia ruminantium (strain Gardel) protein is Adenylosuccinate synthetase.